The chain runs to 222 residues: WAP four-disulfide core domain protein 1 (222 aa).

A signal peptide spans 1-32 (MDSRMLSDQRFCRRIFAAALCVLVLLADSGCA). One can recognise a WAP domain in the interval 61–110 (HYQKNDRCPPPPQTLPDRACEVPSCRSDSECERHKRCCYNGCIYACLESV). Disulfide bonds link Cys-68–Cys-98, Cys-80–Cys-102, Cys-85–Cys-97, and Cys-91–Cys-106.

The protein resides in the secreted. Has growth inhibitory activity. This chain is WAP four-disulfide core domain protein 1 (WFDC1), found in Gallus gallus (Chicken).